The following is a 456-amino-acid chain: Exodeoxyribonuclease 7 large subunit (456 aa).

The tract at residues 1–103 (MLPSQSPAIF…DYQIIVESMQ (103 aa)) is binds ssDNA, also required to bind the small subunit.

The protein belongs to the XseA family. In terms of assembly, heterooligomer composed of two different subunits with an approximate ratio of 4:1 for small to large subunit. Also estimated to have a 6:1 ration for small to large subunits. Does not require a metal cofactor. serves as cofactor.

It localises to the cytoplasm. It catalyses the reaction Exonucleolytic cleavage in either 5'- to 3'- or 3'- to 5'-direction to yield nucleoside 5'-phosphates.. Its function is as follows. Bidirectionally degrades single-stranded DNA into large acid-insoluble oligonucleotides, which are then degraded further into small acid-soluble oligonucleotides. It can degrade 3' or 5' ss regions extending from the termini of duplex DNA molecules and displaced ss regions. It can also excise thymine dimers in vitro. ssDNA-binding requires both subunits. Required for production of the mature 5'-end of retron Ec78 or Ec83 msDNA. Overproduction of this subunit in the absence of an equivalent quantity of the small subunit is toxic, causing cell elongation and chromosome fragmentation or loss; its toxicity is mostly suppressed by RecA. This Escherichia coli (strain K12) protein is Exodeoxyribonuclease 7 large subunit.